We begin with the raw amino-acid sequence, 154 residues long: Spermatogenesis-associated protein 19, mitochondrial (154 aa).

The transit peptide at 1–24 directs the protein to the mitochondrion; that stretch reads MIITTWIVYILARKGAGLPFPPKV. Serine 26 and serine 116 each carry phosphoserine.

The protein resides in the mitochondrion outer membrane. Its subcellular location is the mitochondrion. It is found in the cell projection. It localises to the cilium. The protein localises to the flagellum. Functionally, essential for sperm motility and male fertility. Plays an important role in sperm motility by regulating the organization and function of the mitochondria and is also required for correct sperm midpiece assembly. The sequence is that of Spermatogenesis-associated protein 19, mitochondrial (SPATA19) from Bos taurus (Bovine).